A 261-amino-acid polypeptide reads, in one-letter code: Imidazole glycerol phosphate synthase subunit HisF (261 aa).

Residues Asp-11 and Asp-130 contribute to the active site.

This sequence belongs to the HisA/HisF family. Heterodimer of HisH and HisF.

It is found in the cytoplasm. It catalyses the reaction 5-[(5-phospho-1-deoxy-D-ribulos-1-ylimino)methylamino]-1-(5-phospho-beta-D-ribosyl)imidazole-4-carboxamide + L-glutamine = D-erythro-1-(imidazol-4-yl)glycerol 3-phosphate + 5-amino-1-(5-phospho-beta-D-ribosyl)imidazole-4-carboxamide + L-glutamate + H(+). The protein operates within amino-acid biosynthesis; L-histidine biosynthesis; L-histidine from 5-phospho-alpha-D-ribose 1-diphosphate: step 5/9. IGPS catalyzes the conversion of PRFAR and glutamine to IGP, AICAR and glutamate. The HisF subunit catalyzes the cyclization activity that produces IGP and AICAR from PRFAR using the ammonia provided by the HisH subunit. The chain is Imidazole glycerol phosphate synthase subunit HisF from Jannaschia sp. (strain CCS1).